A 146-amino-acid chain; its full sequence is Cystatin-C (146 aa).

The N-terminal stretch at 1–26 is a signal peptide; that stretch reads MAGPLRAPLLLLAILAVALAVSPAAG. Phosphoserine; by FAM20C is present on serine 43. The Secondary area of contact motif lies at 81 to 85; the sequence is QIVAG. 2 disulfides stabilise this stretch: cysteine 99–cysteine 109 and cysteine 123–cysteine 143.

The protein belongs to the cystatin family. As to quaternary structure, homodimer. Post-translationally, the Thr-25 variant is O-glycosylated with a core 1 or possibly core 8 glycan. The signal peptide of the O-glycosylated Thr-25 variant is cleaved between Ala-20 and Val-21. As to expression, expressed in submandibular and sublingual saliva but not in parotid saliva (at protein level). Expressed in various body fluids, such as the cerebrospinal fluid and plasma. Expressed in highest levels in the epididymis, vas deferens, brain, thymus, and ovary and the lowest in the submandibular gland.

The protein localises to the secreted. Its function is as follows. As an inhibitor of cysteine proteinases, this protein is thought to serve an important physiological role as a local regulator of this enzyme activity. The polypeptide is Cystatin-C (CST3) (Homo sapiens (Human)).